A 156-amino-acid chain; its full sequence is ATP synthase subunit b (156 aa).

Residues 7-27 form a helical membrane-spanning segment; sequence LIGQTVAFIIFVWFCMKFVWP.

It belongs to the ATPase B chain family. F-type ATPases have 2 components, F(1) - the catalytic core - and F(0) - the membrane proton channel. F(1) has five subunits: alpha(3), beta(3), gamma(1), delta(1), epsilon(1). F(0) has three main subunits: a(1), b(2) and c(10-14). The alpha and beta chains form an alternating ring which encloses part of the gamma chain. F(1) is attached to F(0) by a central stalk formed by the gamma and epsilon chains, while a peripheral stalk is formed by the delta and b chains.

The protein localises to the cell inner membrane. F(1)F(0) ATP synthase produces ATP from ADP in the presence of a proton or sodium gradient. F-type ATPases consist of two structural domains, F(1) containing the extramembraneous catalytic core and F(0) containing the membrane proton channel, linked together by a central stalk and a peripheral stalk. During catalysis, ATP synthesis in the catalytic domain of F(1) is coupled via a rotary mechanism of the central stalk subunits to proton translocation. Functionally, component of the F(0) channel, it forms part of the peripheral stalk, linking F(1) to F(0). The sequence is that of ATP synthase subunit b from Shewanella baltica (strain OS185).